An 874-amino-acid polypeptide reads, in one-letter code: Alanine--tRNA ligase (874 aa).

Zn(2+) contacts are provided by His-564, His-568, Cys-666, and His-670.

The protein belongs to the class-II aminoacyl-tRNA synthetase family. Zn(2+) is required as a cofactor.

It localises to the cytoplasm. It catalyses the reaction tRNA(Ala) + L-alanine + ATP = L-alanyl-tRNA(Ala) + AMP + diphosphate. Its function is as follows. Catalyzes the attachment of alanine to tRNA(Ala) in a two-step reaction: alanine is first activated by ATP to form Ala-AMP and then transferred to the acceptor end of tRNA(Ala). Also edits incorrectly charged Ser-tRNA(Ala) and Gly-tRNA(Ala) via its editing domain. The protein is Alanine--tRNA ligase of Carboxydothermus hydrogenoformans (strain ATCC BAA-161 / DSM 6008 / Z-2901).